The following is a 288-amino-acid chain: MTDNTYQPAKVWTWDKSAGGAFANINRPVSGPTHEKTLPVGKHPLQLYSLGTPNGQKVTIMLEELLALGVTGAEYDAWLIRIGDGDQFSSGFVEVNPNSKIPALRDHTHNPPIRVFESGSILLYLAEKFGYFLPQDLAKRTETMNWLFWLQGAAPFLGGGFGHFYHYAPVKIEYAINRFTMEAKRLLDVLDKQLAQHKFVAGDEYTIADMAIWPWFGNVVLGGVYDAAEFLDAGSYKHVQRWAKEVGERPAVKRGRIVNRTNGPLNEQLHERHDASDFETNTEDKRQG.

Glutathione is bound by residues N26, 52–54 (TPN), Q87, I101, 117–118 (ES), Q151, and R178. A GST N-terminal domain is found at 46–133 (QLYSLGTPNG…YLAEKFGYFL (88 aa)). The GST C-terminal domain occupies 139-265 (KRTETMNWLF…RIVNRTNGPL (127 aa)). A disordered region spans residues 260-288 (RTNGPLNEQLHERHDASDFETNTEDKRQG). The span at 268–288 (QLHERHDASDFETNTEDKRQG) shows a compositional bias: basic and acidic residues.

The protein belongs to the GST superfamily. Nu-class GSH transferase family. As to quaternary structure, homodimer.

Exhibits a robust glutathione (GSH)-dependent disulfide-bond reductase activity toward the model substrate, 2-hydroxyethyl disulfide; the actual physiological substrates are not known. Also displays a modest GSH-dependent peroxidase activity toward several organic hydroperoxides, such as cumene hydroperoxide and linoleic acid 13(S)-hydroperoxide, but does not reduce H(2)O(2) or tert-butyl hydroperoxide at appreciable rates. Exhibits little or no GSH transferase activity with most typical electrophilic substrates, and has no detectable transferase activity toward 1-chloro-2,4-dinitrobenzene (CDNB) with glutathionylspermidine (GspSH) as the nucleophilic substrate. The polypeptide is Disulfide-bond oxidoreductase YghU (yghU) (Escherichia coli (strain K12)).